The chain runs to 329 residues: Sideroflexin-1.1 (329 aa).

Helical transmembrane passes span Met-100–Phe-122, Leu-150–Gly-167, Leu-178–Met-198, Val-232–Ile-254, and Ile-274–Phe-294.

It belongs to the sideroflexin family.

It is found in the mitochondrion inner membrane. It catalyses the reaction L-serine(in) = L-serine(out). The enzyme catalyses L-alanine(in) = L-alanine(out). It carries out the reaction L-cysteine(in) = L-cysteine(out). Amino acid transporter importing serine, an essential substrate of the mitochondrial branch of the one-carbon pathway, into mitochondria. Mitochondrial serine is then converted to glycine and formate, which exits to the cytosol where it is used to generate the charged folates that serve as one-carbon donors. May also transport other amino acids including alanine and cysteine. In Caenorhabditis elegans, this protein is Sideroflexin-1.1.